The following is a 307-amino-acid chain: Phosphate import ATP-binding protein PstB (307 aa).

The interval 1 to 30 is disordered; that stretch reads MSETTYTTTEDTDDTNSTDSMVGTTTGETD. The ABC transporter domain maps to 48 to 302; that stretch reads LGVDDLDVYY…PQSERVEDYI (255 aa). Position 80–87 (80–87) interacts with ATP; it reads GPSGCGKS.

The protein belongs to the ABC transporter superfamily. Phosphate importer (TC 3.A.1.7) family. The complex is composed of two ATP-binding proteins (PstB), two transmembrane proteins (PstC and PstA) and a solute-binding protein (PstS).

The protein resides in the cell membrane. It catalyses the reaction phosphate(out) + ATP + H2O = ADP + 2 phosphate(in) + H(+). Part of the ABC transporter complex PstSACB involved in phosphate import. Responsible for energy coupling to the transport system. The polypeptide is Phosphate import ATP-binding protein PstB (Haloquadratum walsbyi (strain DSM 16790 / HBSQ001)).